We begin with the raw amino-acid sequence, 388 residues long: MIYKTIVEGTTKVSVPVPPPDATFPPSAAPVFYNPEMELNRDINVAATAAFVERLLAKKELLREEVRYVDAFSASGIRGLRIAGEVGIHATMNDWSPEAFELIKENSKINGLEENTLATRKSANVLLHEQKYHIVDIDPFGTPAPFLDAASASVRGMLSVTATDTAPLCGAHLKAGIRKYASVPLNTEYHSEMGLRVLLGACARELAKHEKGMLPLLSHVTRHYVRTYLEVLPGTKQTDRTLKSMGFSIHCPKCGFRGPVYGLAVHIEKECPVCGSFTQIAGPLWLGPFREQAFCDEVISELEMHPLNTKDKAKKIITFCRDELDIPMFYDQHVICKELGASATGIEILIEALKAHGFEASRTHFSGTSFRTDAPITEIKEIIRALSW.

The 380-residue stretch at 4-383 (KTIVEGTTKV…APITEIKEII (380 aa)) folds into the Trm1 methyltransferase domain. S-adenosyl-L-methionine-binding residues include Arg41, Arg78, Asp94, and Ala123. The Zn(2+) site is built by Cys251, Cys254, Cys271, and Cys274.

It belongs to the class I-like SAM-binding methyltransferase superfamily. Trm1 family.

The enzyme catalyses guanosine(26) in tRNA + 2 S-adenosyl-L-methionine = N(2)-dimethylguanosine(26) in tRNA + 2 S-adenosyl-L-homocysteine + 2 H(+). Its function is as follows. Dimethylates a single guanine residue at position 26 of a number of tRNAs using S-adenosyl-L-methionine as donor of the methyl groups. The sequence is that of tRNA (guanine(26)-N(2))-dimethyltransferase from Methanosarcina barkeri (strain Fusaro / DSM 804).